The chain runs to 887 residues: Tiger protein O1 (887 aa).

The signal sequence occupies residues 1–21 (MEKKLLIIVIVFLFSTIQVFC). Over 22–845 (RIDDKTFVIS…SLSKKSIILL (824 aa)) the chain is Extracellular. Residues Asn32, Asn70, Asn186, Asn207, Asn219, Asn259, Asn297, Asn314, Asn325, Asn338, Asn354, Asn393, Asn431, Asn588, Asn629, Asn652, Asn687, Asn710, Asn720, Asn730, Asn775, Asn788, Asn811, and Asn816 are each glycosylated (N-linked (GlcNAc...) asparagine). An IPT/TIG 1 domain is found at 277 to 365 (NSVPYSKGGL…TNENKLLFNY (89 aa)). The region spanning 710–767 (NTSSINVNGGNLTIYGKNFYNVSNIKVEVDNQLKCNKIEFINLNSLTCFLPPFIETLF) is the IPT/TIG 2 domain. Positions 811 to 835 (NDTSENSTNDILNHEKNNNNQKDGS) are disordered. A helical membrane pass occupies residues 846–866 (SILLPSFIILIVSLAIVILVI). Residues 867–887 (KRNKTKHSKNMSSKEKELMKQ) are Cytoplasmic-facing.

It is found in the membrane. This Dictyostelium discoideum (Social amoeba) protein is Tiger protein O1 (tgrO1).